The sequence spans 231 residues: Cytidylate kinase (231 aa).

18-26 (GPSGTGKSS) is an ATP binding site.

The protein belongs to the cytidylate kinase family. Type 1 subfamily.

The protein localises to the cytoplasm. It catalyses the reaction CMP + ATP = CDP + ADP. It carries out the reaction dCMP + ATP = dCDP + ADP. This is Cytidylate kinase from Streptomyces avermitilis (strain ATCC 31267 / DSM 46492 / JCM 5070 / NBRC 14893 / NCIMB 12804 / NRRL 8165 / MA-4680).